The following is a 595-amino-acid chain: DNA-directed RNA polymerase III subunit RPC3 (595 aa).

Residues 523-544 (LIYDMAEILNRIQDFKLEHKIL) are leucine-zipper.

Belongs to the RNA polymerase beta chain family. In terms of assembly, component of the RNA polymerase III (Pol III) complex consisting of 17 subunits.

The protein localises to the nucleus. In terms of biological role, DNA-dependent RNA polymerase catalyzes the transcription of DNA into RNA using the four ribonucleoside triphosphates as substrates. Specific core component of RNA polymerase III which synthesizes small RNAs, such as 5S rRNA and tRNAs. The protein is DNA-directed RNA polymerase III subunit RPC3 (RPC82) of Candida albicans (strain SC5314 / ATCC MYA-2876) (Yeast).